Consider the following 378-residue polypeptide: MSHLDNGFRSLNLKRFPETDDVNPLQAWEAADEYLLQQLDDTEISGPVLVLNDVFGALACALAEHTPYSIGDSYLSELATRENLRHNEIAESSVKFLDSTAEYPQAPGVVLIKIPKTLALLEQQLRALRLVVTPQTRIIAGAKARDIHNSTLELFEKILGTTTTTLAWKKARLINCTFTEPALVDAQQMLSWKLEGTDWTIHNHANVFSRTGLDIGARFFLEHLPGNLEGEIVDLGCGNGVVGLTLLEKNPEASVLFTDESPMAVASSRLNVETNMPEALDRCEFMINNALSGVEPFRFNAVLCNPPFHQQHALTDNVAWEMFHHARRCLKINGELYIVANRHLDYFHKLKKIFGNCTTIATNNKFVVLKAVKLGRTR.

This sequence belongs to the methyltransferase superfamily. RlmG family.

The protein resides in the cytoplasm. It catalyses the reaction guanosine(1835) in 23S rRNA + S-adenosyl-L-methionine = N(2)-methylguanosine(1835) in 23S rRNA + S-adenosyl-L-homocysteine + H(+). Functionally, specifically methylates the guanine in position 1835 (m2G1835) of 23S rRNA. The chain is Ribosomal RNA large subunit methyltransferase G from Enterobacter sp. (strain 638).